We begin with the raw amino-acid sequence, 413 residues long: Sulfoquinovose isomerase (413 aa).

Residues arginine 55, tyrosine 111, asparagine 172, histidine 176, and arginine 238 each coordinate 6-sulfo-beta-D-quinovose. The active-site Proton donor/acceptor is histidine 248. Glutamate 251, glutamine 362, glutamine 379, and histidine 383 together coordinate 6-sulfo-beta-D-quinovose. Catalysis depends on histidine 383, which acts as the Proton donor/acceptor.

The protein belongs to the N-acylglucosamine 2-epimerase family. In terms of assembly, homohexamer.

It carries out the reaction 6-sulfo-beta-D-quinovose = 6-deoxy-6-sulfo-D-fructose. The catalysed reaction is 6-sulfo-beta-D-quinovose = 6-sulfo-D-rhamnose. Its activity is regulated as follows. Significantly inhibited by Cu(2+), Fe(3+) and Co(2+). Partially inhibited by Mg(2+), Ca(2+) and Mn(2+). Also inhibited by ATP, ADP, dATP, TTP and GTP. Its function is as follows. Catalyzes the isomerization of sulfoquinovose (SQ) to 6-deoxy-6-sulfo-D-fructose (SF). Can also catalyze the interconversion of SQ and sulforhamnose (SR). Has a clear preference for beta-SQ and little-to-no activity on alpha-SQ. In vitro, can also catalyze the interconversion of mannose, fructose and glucose, or lyxose and xylulose, but has extremely low activity with glucose. The sequence is that of Sulfoquinovose isomerase (yihS) from Escherichia coli (strain K12).